Here is a 400-residue protein sequence, read N- to C-terminus: Enoyl-[acyl-carrier-protein] reductase [NADH] (400 aa).

Residues 48-53 (GSSSGY), 74-75 (FE), 111-112 (DA), and 139-140 (LA) each bind NAD(+). Residue Tyr-225 participates in substrate binding. The active-site Proton donor is Tyr-235. NAD(+)-binding positions include Lys-244 and 273-275 (VVT).

Belongs to the TER reductase family. As to quaternary structure, monomer.

It carries out the reaction a 2,3-saturated acyl-[ACP] + NAD(+) = a (2E)-enoyl-[ACP] + NADH + H(+). It participates in lipid metabolism; fatty acid biosynthesis. Involved in the final reduction of the elongation cycle of fatty acid synthesis (FAS II). Catalyzes the reduction of a carbon-carbon double bond in an enoyl moiety that is covalently linked to an acyl carrier protein (ACP). This is Enoyl-[acyl-carrier-protein] reductase [NADH] from Aliivibrio fischeri (strain ATCC 700601 / ES114) (Vibrio fischeri).